Here is a 610-residue protein sequence, read N- to C-terminus: Prolactin receptor (610 aa).

The signal sequence occupies residues 1 to 19 (MPSALAFVLLVLNISLLKG). Topologically, residues 20-229 (QSPPGKPEIH…EMPNDFTLKD (210 aa)) are extracellular. 2 Fibronectin type-III domains span residues 22-122 (PPGK…IVEP) and 124-224 (PPRN…MPND). A disulfide bridge links Cys31 with Cys41. Asn54 carries an N-linked (GlcNAc...) asparagine glycan. Cys70 and Cys81 form a disulfide bridge. Asn99 and Asn127 each carry an N-linked (GlcNAc...) asparagine glycan. The Zn(2+) site is built by Asp206 and His207. The short motif at 210–214 (WSRWS) is the WSXWS motif element. The chain crosses the membrane as a helical span at residues 230–253 (TTVWIIVAILSAVICLIMVWAVAL). Residues 254-610 (KGYSMMTCIF…DPTCFMHSFH (357 aa)) lie on the Cytoplasmic side of the membrane. The Box 1 motif signature appears at 262-270 (IFPPVPGPK). Disordered stretches follow at residues 317–355 (DERLMPSHSKEYPGQGVKPTHLDPDSDSGHGSYDSHSLL), 458–482 (TGEEEVAEQKGAKSFPSDKQNTPWP), and 564–584 (AKKAPPSFEADQSEKDLASFT). The segment covering 318–327 (ERLMPSHSKE) has biased composition (basic and acidic residues). Over residues 345–354 (GHGSYDSHSL) the composition is skewed to low complexity.

It belongs to the type I cytokine receptor family. Type 1 subfamily. Interacts with SMARCA1. Interacts with NEK3 and VAV2 and this interaction is prolactin-dependent.

Its subcellular location is the membrane. This is a receptor for the anterior pituitary hormone prolactin. In Rattus norvegicus (Rat), this protein is Prolactin receptor (Prlr).